The primary structure comprises 673 residues: Ion-translocating oxidoreductase complex subunit C (673 aa).

4Fe-4S ferredoxin-type domains follow at residues 368-397 (MGAP…QQLY) and 407-436 (KATA…VQYF). Positions 377, 380, 383, 387, 416, 419, 422, and 426 each coordinate [4Fe-4S] cluster. The interval 529–554 (EARKAQARAKQAGHPMADSATSGDDP) is disordered.

Belongs to the 4Fe4S bacterial-type ferredoxin family. RnfC subfamily. The complex is composed of six subunits: RsxA, RsxB, RsxC, RsxD, RsxE and RsxG. It depends on [4Fe-4S] cluster as a cofactor.

The protein localises to the cell inner membrane. Its function is as follows. Part of a membrane-bound complex that couples electron transfer with translocation of ions across the membrane. Required to maintain the reduced state of SoxR. The polypeptide is Ion-translocating oxidoreductase complex subunit C (Salmonella arizonae (strain ATCC BAA-731 / CDC346-86 / RSK2980)).